A 211-amino-acid polypeptide reads, in one-letter code: Ribosomal RNA small subunit methyltransferase G (211 aa).

S-adenosyl-L-methionine contacts are provided by residues glycine 79, leucine 84, 130–131, and arginine 145; that span reads VE.

Belongs to the methyltransferase superfamily. RNA methyltransferase RsmG family.

It localises to the cytoplasm. The enzyme catalyses guanosine(527) in 16S rRNA + S-adenosyl-L-methionine = N(7)-methylguanosine(527) in 16S rRNA + S-adenosyl-L-homocysteine. Functionally, specifically methylates the N7 position of guanine in position 527 of 16S rRNA. In Alteromonas mediterranea (strain DSM 17117 / CIP 110805 / LMG 28347 / Deep ecotype), this protein is Ribosomal RNA small subunit methyltransferase G.